A 646-amino-acid chain; its full sequence is Chaperone protein DnaK (646 aa).

Threonine 198 bears the Phosphothreonine; by autocatalysis mark. Positions 603-646 (EQAQQAGGAEGFDPNAFQGGDAGQQKADDGVVDAEFTEVKDDKK) are disordered. Low complexity predominate over residues 618–627 (AFQGGDAGQQ).

It belongs to the heat shock protein 70 family.

Acts as a chaperone. The protein is Chaperone protein DnaK of Acinetobacter baumannii (strain ACICU).